A 736-amino-acid polypeptide reads, in one-letter code: Gingipain R2 (736 aa).

Positions 1-24 are cleaved as a signal peptide; sequence MKKNFSRIVSIVAFSSLLGGMAFA. Residues 25-229 constitute a propeptide that is removed on maturation; it reads QPAERGRNPQ…SVFMNYEATR (205 aa). Residues Asp-307, Val-329, Asp-332, Tyr-334, Glu-336, Glu-390, and His-395 each contribute to the Ca(2+) site. His-440 serves as the catalytic Proton donor. Cys-473 (nucleophile) is an active-site residue. Ca(2+)-binding residues include Phe-478, Glu-487, Asp-521, Glu-522, Glu-525, His-531, Asp-613, and Glu-639.

Belongs to the peptidase C25 family.

The protein resides in the secreted. The enzyme catalyses Hydrolysis of proteins and small molecule substrates, with a preference for Arg in P1.. In terms of biological role, thiol protease. Acts synergistically with RgpA to catalyze the maturation of fimbrial subunits, such as FimA. Its proteolytic activity is a major factor in both periodontal tissue destruction and in evasion of host defense mechanisms. The chain is Gingipain R2 from Porphyromonas gingivalis (strain ATCC 33277 / DSM 20709 / CIP 103683 / JCM 12257 / NCTC 11834 / 2561).